We begin with the raw amino-acid sequence, 331 residues long: Homoserine kinase (331 aa).

This sequence belongs to the pseudomonas-type ThrB family.

It carries out the reaction L-homoserine + ATP = O-phospho-L-homoserine + ADP + H(+). The protein operates within amino-acid biosynthesis; L-threonine biosynthesis; L-threonine from L-aspartate: step 4/5. In Burkholderia thailandensis (strain ATCC 700388 / DSM 13276 / CCUG 48851 / CIP 106301 / E264), this protein is Homoserine kinase.